A 291-amino-acid chain; its full sequence is Proteasome subunit beta (291 aa).

A propeptide spans 1-57 (MTWPLPDRLSINSLSGTPAVDLSSFTDFLRRQAPELLPASISGGAPLAGGDAQLPHG) (removed in mature form; by autocatalysis). T58 acts as the Nucleophile in catalysis.

Belongs to the peptidase T1B family. In terms of assembly, the 20S proteasome core is composed of 14 alpha and 14 beta subunits that assemble into four stacked heptameric rings, resulting in a barrel-shaped structure. The two inner rings, each composed of seven catalytic beta subunits, are sandwiched by two outer rings, each composed of seven alpha subunits. The catalytic chamber with the active sites is on the inside of the barrel. Has a gated structure, the ends of the cylinder being occluded by the N-termini of the alpha-subunits. Is capped by the proteasome-associated ATPase, ARC.

It is found in the cytoplasm. The enzyme catalyses Cleavage of peptide bonds with very broad specificity.. The protein operates within protein degradation; proteasomal Pup-dependent pathway. With respect to regulation, the formation of the proteasomal ATPase ARC-20S proteasome complex, likely via the docking of the C-termini of ARC into the intersubunit pockets in the alpha-rings, may trigger opening of the gate for substrate entry. Interconversion between the open-gate and close-gate conformations leads to a dynamic regulation of the 20S proteasome proteolysis activity. Its function is as follows. Component of the proteasome core, a large protease complex with broad specificity involved in protein degradation. The polypeptide is Proteasome subunit beta (Mycobacterium tuberculosis (strain ATCC 25177 / H37Ra)).